Reading from the N-terminus, the 349-residue chain is N-acetyltaurine hydrolase (349 aa).

6 residues coordinate a divalent metal cation: His-26, His-28, Glu-169, His-201, His-230, and Asp-298.

This sequence belongs to the metallo-dependent hydrolases superfamily. Phosphotriesterase family. A divalent metal cation is required as a cofactor. As to expression, expressed in the kidney, liver and brainstem.

Its subcellular location is the cytoplasm. It is found in the cytosol. The enzyme catalyses N-acetyltaurine + H2O = taurine + acetate. It catalyses the reaction N-propanoyltaurine + H2O = propanoate + taurine. The catalysed reaction is N-acetyl-L-methionine + H2O = L-methionine + acetate. It carries out the reaction N-acetyl-L-isoleucine + H2O = L-isoleucine + acetate. The enzyme catalyses N-acetyl-L-leucine + H2O = L-leucine + acetate. It catalyses the reaction N-acetyl-L-valine + H2O = L-valine + acetate. Its function is as follows. N-acetyltaurine hydrolase that regulates feeding by catalyzing the hydrolysis of N-acetyltaurine into taurine and acetate. N-acetyltaurine has anorexigenic and anti-obesity effects that are dependent on GFRAL receptor and GDF15. PTER also acts on other N-acetyl amino acids (Met, Ile, Leu, Val) and N-propionyltaurine, but at lower rates. In Mus musculus (Mouse), this protein is N-acetyltaurine hydrolase.